We begin with the raw amino-acid sequence, 479 residues long: Serine--tRNA ligase, mitochondrial (479 aa).

A mitochondrion-targeting transit peptide spans 1 to 42 (MRLTNRRFSTFLGNALPSKKKGFIFMSQLLYLRTFSTHTSYL). 287-289 (TAE) provides a ligand contact to L-serine. An ATP-binding site is contributed by 317 to 319 (RRE). Residue Glu340 coordinates L-serine. Residue 404–407 (EITS) coordinates ATP. Thr438 lines the L-serine pocket.

The protein belongs to the class-II aminoacyl-tRNA synthetase family. Type-1 seryl-tRNA synthetase subfamily. As to quaternary structure, homodimer. The tRNA molecule probably binds across the dimer.

It localises to the mitochondrion matrix. The catalysed reaction is tRNA(Ser) + L-serine + ATP = L-seryl-tRNA(Ser) + AMP + diphosphate + H(+). Its function is as follows. Catalyzes the attachment of serine to tRNA(Ser). Is also probably able to aminoacylate tRNA(Sec) with serine, to form the misacylated tRNA L-seryl-tRNA(Sec), which will be further converted into selenocysteinyl-tRNA(Sec). This Schizosaccharomyces pombe (strain 972 / ATCC 24843) (Fission yeast) protein is Serine--tRNA ligase, mitochondrial (dia4).